Reading from the N-terminus, the 151-residue chain is Large ribosomal subunit protein bL9 (151 aa).

It belongs to the bacterial ribosomal protein bL9 family.

In terms of biological role, binds to the 23S rRNA. The chain is Large ribosomal subunit protein bL9 from Lactobacillus delbrueckii subsp. bulgaricus (strain ATCC BAA-365 / Lb-18).